The chain runs to 229 residues: Small ribosomal subunit protein uS3 (229 aa).

The KH type-2 domain maps to 39 to 109 (MRKYIKEQLM…QVNIDIVEIR (71 aa)). The tract at residues 210–229 (VVSQQNSRPSGPRGPRRPRA) is disordered.

The protein belongs to the universal ribosomal protein uS3 family. Part of the 30S ribosomal subunit. Forms a tight complex with proteins S10 and S14.

Functionally, binds the lower part of the 30S subunit head. Binds mRNA in the 70S ribosome, positioning it for translation. In Akkermansia muciniphila (strain ATCC BAA-835 / DSM 22959 / JCM 33894 / BCRC 81048 / CCUG 64013 / CIP 107961 / Muc), this protein is Small ribosomal subunit protein uS3.